Reading from the N-terminus, the 334-residue chain is Ornithine carbamoyltransferase (334 aa).

Carbamoyl phosphate-binding positions include 56 to 59 (STRT), Q83, R107, and 134 to 137 (HPTQ). Residues N168, D232, and 236 to 237 (SM) contribute to the L-ornithine site. Carbamoyl phosphate is bound by residues 274–275 (CL) and R320.

Belongs to the aspartate/ornithine carbamoyltransferase superfamily. OTCase family.

It is found in the cytoplasm. The enzyme catalyses carbamoyl phosphate + L-ornithine = L-citrulline + phosphate + H(+). The protein operates within amino-acid biosynthesis; L-arginine biosynthesis; L-arginine from L-ornithine and carbamoyl phosphate: step 1/3. Functionally, reversibly catalyzes the transfer of the carbamoyl group from carbamoyl phosphate (CP) to the N(epsilon) atom of ornithine (ORN) to produce L-citrulline. This Shigella dysenteriae serotype 1 (strain Sd197) protein is Ornithine carbamoyltransferase.